Consider the following 242-residue polypeptide: Uridylate kinase (242 aa).

ATP is bound by residues 15–18, Gly58, and Arg62; that span reads KISG. Residues Asp77 and 139–146 contribute to the UMP site; that span reads TGNPFFTT. Positions 166, 172, and 175 each coordinate ATP.

It belongs to the UMP kinase family. In terms of assembly, homohexamer.

The protein localises to the cytoplasm. The enzyme catalyses UMP + ATP = UDP + ADP. The protein operates within pyrimidine metabolism; CTP biosynthesis via de novo pathway; UDP from UMP (UMPK route): step 1/1. With respect to regulation, inhibited by UTP. Its function is as follows. Catalyzes the reversible phosphorylation of UMP to UDP. This chain is Uridylate kinase, found in Buchnera aphidicola subsp. Acyrthosiphon pisum (strain APS) (Acyrthosiphon pisum symbiotic bacterium).